The primary structure comprises 407 residues: Probable acyl-CoA dehydrogenase FadE2 (407 aa).

The protein belongs to the acyl-CoA dehydrogenase family. FAD serves as cofactor.

The enzyme catalyses a 2,3-saturated acyl-CoA + A = a 2,3-dehydroacyl-CoA + AH2. In Mycobacterium tuberculosis (strain ATCC 25618 / H37Rv), this protein is Probable acyl-CoA dehydrogenase FadE2.